Here is a 132-residue protein sequence, read N- to C-terminus: Small ribosomal subunit protein uS8 (132 aa).

The protein belongs to the universal ribosomal protein uS8 family. As to quaternary structure, part of the 30S ribosomal subunit. Contacts proteins S5 and S12.

In terms of biological role, one of the primary rRNA binding proteins, it binds directly to 16S rRNA central domain where it helps coordinate assembly of the platform of the 30S subunit. The sequence is that of Small ribosomal subunit protein uS8 from Rhizobium johnstonii (strain DSM 114642 / LMG 32736 / 3841) (Rhizobium leguminosarum bv. viciae).